Here is a 213-residue protein sequence, read N- to C-terminus: uncharacterized protein (213 aa).

The chain crosses the membrane as a helical span at residues 22–42 (WFGLSMVSIAVIFGPLTGAHV). The NPA 1 motif lies at 43-45 (NPA). 3 helical membrane-spanning segments follow: residues 63–83 (VYII…WLLF), 112–132 (NLLS…TLNH), and 138–158 (GVAM…FGGL). The NPA 2 motif lies at 164-166 (NPA). A helical transmembrane segment spans residues 188–208 (FDYAWVPVLRPVIGAILAAWL).

It belongs to the MIP/aquaporin (TC 1.A.8) family.

It localises to the cell membrane. This is an uncharacterized protein from Haemophilus influenzae (strain ATCC 51907 / DSM 11121 / KW20 / Rd).